The sequence spans 494 residues: Costunolide synthase (494 aa).

A helical membrane pass occupies residues 3–23; sequence PLTIVSLVVASLFLFAFWALS. Residue Cys-432 coordinates heme.

Belongs to the cytochrome P450 family. Heme is required as a cofactor.

The protein resides in the membrane. The catalysed reaction is germacra-1(10),4,11(13)-trien-12-oate + reduced [NADPH--hemoprotein reductase] + O2 = (+)-costunolide + oxidized [NADPH--hemoprotein reductase] + 2 H2O. Its function is as follows. Hydroxylates germacrene A acid to 6-alpha-hydroxy-germacrne A acid, a precursor of sesquiterpene lactones that spontaneously undergoes a lactonization which yields costunolide. Costunolide can then spontaneously conjugate to glutathione or cysteine. The sequence is that of Costunolide synthase (CYP71BL3) from Cichorium intybus (Chicory).